Here is a 271-residue protein sequence, read N- to C-terminus: Enolase-phosphatase E1 (271 aa).

Asp16 and Glu18 together coordinate Mg(2+). Residues 150–151 (SS) and Lys199 each bind substrate. Position 226 (Asp226) interacts with Mg(2+).

The protein belongs to the HAD-like hydrolase superfamily. MasA/MtnC family. Monomer. It depends on Mg(2+) as a cofactor.

The protein localises to the cytoplasm. It localises to the nucleus. It carries out the reaction 5-methylsulfanyl-2,3-dioxopentyl phosphate + H2O = 1,2-dihydroxy-5-(methylsulfanyl)pent-1-en-3-one + phosphate. It functions in the pathway amino-acid biosynthesis; L-methionine biosynthesis via salvage pathway; L-methionine from S-methyl-5-thio-alpha-D-ribose 1-phosphate: step 3/6. It participates in amino-acid biosynthesis; L-methionine biosynthesis via salvage pathway; L-methionine from S-methyl-5-thio-alpha-D-ribose 1-phosphate: step 4/6. Its function is as follows. Bifunctional enzyme that catalyzes the enolization of 2,3-diketo-5-methylthiopentyl-1-phosphate (DK-MTP-1-P) into the intermediate 2-hydroxy-3-keto-5-methylthiopentenyl-1-phosphate (HK-MTPenyl-1-P), which is then dephosphorylated to form the acireductone 1,2-dihydroxy-3-keto-5-methylthiopentene (DHK-MTPene). This chain is Enolase-phosphatase E1, found in Candida dubliniensis (strain CD36 / ATCC MYA-646 / CBS 7987 / NCPF 3949 / NRRL Y-17841) (Yeast).